Here is a 154-residue protein sequence, read N- to C-terminus: Cytochrome c-type biogenesis protein CcmE (154 aa).

The Cytoplasmic portion of the chain corresponds to 1–8 (MTPQRKRR). Residues 9 to 29 (LVMLAALAGGVGVAVALALAA) traverse the membrane as a helical; Signal-anchor for type II membrane protein segment. Residues 30 to 154 (LQQNINLFYS…GGTPAAEPQP (125 aa)) lie on the Periplasmic side of the membrane. The heme site is built by His-124 and Tyr-128. The interval 130-154 (PPEAAHALKQGAATSGGTPAAEPQP) is disordered.

Belongs to the CcmE/CycJ family.

The protein resides in the cell inner membrane. Its function is as follows. Heme chaperone required for the biogenesis of c-type cytochromes. Transiently binds heme delivered by CcmC and transfers the heme to apo-cytochromes in a process facilitated by CcmF and CcmH. This Bordetella petrii (strain ATCC BAA-461 / DSM 12804 / CCUG 43448) protein is Cytochrome c-type biogenesis protein CcmE.